The following is a 1214-amino-acid chain: SWI/SNF complex subunit SMARCC2 (1214 aa).

The segment at 1–274 is marR-like, BRCT and chromo domains module; it reads MAVRKKDGGP…PVSRRKKISA (274 aa). The 127-residue stretch at 10–136 folds into the MarR-like domain; sequence PNVKYYEAAD…IEKSLVQNNC (127 aa). The BRCT; N-terminus domain occupies 140-183; it reads PNIFLCPEIEPKLLGKLKDIIKRHQGTVTEDKNNASHVVYPVPG. One can recognise a Chromo domain in the interval 189–217; sequence EWVRPVMKRDKQVLLHWGYYPDSYDTWIP. The region spanning 233–257 is the BRCT; C-terminus domain; the sequence is KPRKVHAKWILDTDTFNEWMNEEDY. The interval 257–413 is disordered; sequence YEVNDDKNPV…GEQTKNPDLH (157 aa). Residues 275-284 are compositionally biased toward polar residues; the sequence is KTLTDEVNSP. Phosphoserine is present on residues serine 283, serine 286, serine 302, serine 304, and serine 306. Lysine 312 is modified (N6-(ADP-ribosyl)lysine). Lysine 326 is subject to N6-acetyllysine. Residues 331-344 show a composition bias toward basic and acidic residues; it reads HREEEQEDLTKDMD. Phosphoserine is present on residues serine 347 and serine 387. Acidic residues predominate over residues 379–398; that stretch reads DLDEQEDESMETTGKDEDEN. An SWIRM domain is found at 424–521; it reads IIIPSYAAWF…YQVDAESRPT (98 aa). Threonine 548 is modified (phosphothreonine). Glycyl lysine isopeptide (Lys-Gly) (interchain with G-Cter in SUMO2) cross-links involve residues lysine 564, lysine 566, lysine 568, and lysine 592. Residues 596 to 647 form the SANT domain; that stretch reads SATREWTEQETLLLLEALEMYKDDWNKVSEHVGSRTQDECILHFLRLPIEDP. Residue lysine 704 forms a Glycyl lysine isopeptide (Lys-Gly) (interchain with G-Cter in SUMO2) linkage. The tract at residues 724-852 is disordered; the sequence is KVTGKADPAF…GERKTKVERD (129 aa). Basic and acidic residues-rich tracts occupy residues 747–777 and 784–852; these read EPERIEESGNDEARVEGQATDEKKEPKEPRE and EEAK…VERD. Lysine 787 participates in a covalent cross-link: Glycyl lysine isopeptide (Lys-Gly) (interchain with G-Cter in SUMO2). Serine 813 carries the post-translational modification Phosphoserine. Residue lysine 848 forms a Glycyl lysine isopeptide (Lys-Gly) (interchain with G-Cter in SUMO2) linkage. Positions 907–934 form a coiled coil; sequence EELETIMDREREALEYQRQQLLADRQAF. Disordered regions lie at residues 947-983, 997-1092, and 1182-1214; these read RQQHFQQMHQQQQQPPPALPPGSQPIPPTGAAGPPAV, PAGS…PPPP, and LPSASPLPDPGTPLPPDPTAPSPGTVTPVPPPQ. The span at 949–959 shows a compositional bias: low complexity; the sequence is QHFQQMHQQQQ. Pro residues predominate over residues 960–974; it reads QPPPALPPGSQPIPP. The segment covering 997-1033 has biased composition (low complexity); the sequence is PAGSGAPPGSLGPSEQIGQAGSTAGPQQQQPAGAPQP. Composition is skewed to pro residues over residues 1034-1051 and 1186-1202; these read GAVPPGVPPPGPHGPSPF and SPLPDPGTPLPPDPTAP.

The protein belongs to the SMARCC family. In terms of assembly, component of the multiprotein chromatin-remodeling complexes SWI/SNF: SWI/SNF-A (BAF), SWI/SNF-B (PBAF) and related complexes. The canonical complex contains a catalytic subunit (either SMARCA4/BRG1/BAF190A or SMARCA2/BRM/BAF190B) and at least SMARCE1, ACTL6A/BAF53, SMARCC1/BAF155, SMARCC2/BAF170, and SMARCB1/SNF5/BAF47. Other subunits specific to each of the complexes may also be present permitting several possible combinations developmentally and tissue specific. Component of the BAF complex, which includes at least actin (ACTB), ARID1A/BAF250A, ARID1B/BAF250B, SMARCA2/BRM, SMARCA4/BRG1, ACTL6A/BAF53, ACTL6B/BAF53B, SMARCE1/BAF57, SMARCC1/BAF155, SMARCC2/BAF170, SMARCB1/SNF5/INI1, and one or more SMARCD1/BAF60A, SMARCD2/BAF60B, or SMARCD3/BAF60C. In muscle cells, the BAF complex also contains DPF3. Component of neural progenitors-specific chromatin remodeling complex (npBAF complex) composed of at least, ARID1A/BAF250A or ARID1B/BAF250B, SMARCD1/BAF60A, SMARCD3/BAF60C, SMARCA2/BRM/BAF190B, SMARCA4/BRG1/BAF190A, SMARCB1/BAF47, SMARCC1/BAF155, SMARCE1/BAF57, SMARCC2/BAF170, PHF10/BAF45A, ACTL6A/BAF53A and actin. Component of neuron-specific chromatin remodeling complex (nBAF complex) composed of at least, ARID1A/BAF250A or ARID1B/BAF250B, SMARCD1/BAF60A, SMARCD3/BAF60C, SMARCA2/BRM/BAF190B, SMARCA4/BRG1/BAF190A, SMARCB1/BAF47, SMARCC1/BAF155, SMARCE1/BAF57, SMARCC2/BAF170, DPF1/BAF45B, DPF3/BAF45C, ACTL6B/BAF53B and actin. Component of the SWI/SNF-B (PBAF) chromatin remodeling complex, at least composed of SMARCA4/BRG1, SMARCB1/BAF47/SNF5, ACTL6A/BAF53A or ACTL6B/BAF53B, SMARCE1/BAF57, SMARCD1/BAF60A, SMARCD2/BAF60B, perhaps SMARCD3/BAF60C, SMARCC1/BAF155, SMARCC2/BAF170, PBRM1/BAF180, ARID2/BAF200 and actin. May also interact with the SIN3A histone deacetylase transcription repressor complex in conjunction with SMARCA2 and SMARCA4. Interacts with SMARD1. Interacts with KDM6B. Interaction with RCOR1. Interacts with DPF2. Interacts with ERCC6. Interacts with FOS. Mono-ADP-ribosylation at Lys-312 by SIRT6 promotes recruitment to the enhancer region of the Heme oxygenase-1 (HO-1) locus, leading to transcription activation of the locus. In terms of tissue distribution, ubiquitously expressed.

It localises to the nucleus. Its function is as follows. Involved in transcriptional activation and repression of select genes by chromatin remodeling (alteration of DNA-nucleosome topology). Component of SWI/SNF chromatin remodeling complexes that carry out key enzymatic activities, changing chromatin structure by altering DNA-histone contacts within a nucleosome in an ATP-dependent manner. Can stimulate the ATPase activity of the catalytic subunit of these complexes. May be required for CoREST dependent repression of neuronal specific gene promoters in non-neuronal cells. Belongs to the neural progenitors-specific chromatin remodeling complex (npBAF complex) and the neuron-specific chromatin remodeling complex (nBAF complex). During neural development a switch from a stem/progenitor to a postmitotic chromatin remodeling mechanism occurs as neurons exit the cell cycle and become committed to their adult state. The transition from proliferating neural stem/progenitor cells to postmitotic neurons requires a switch in subunit composition of the npBAF and nBAF complexes. As neural progenitors exit mitosis and differentiate into neurons, npBAF complexes which contain ACTL6A/BAF53A and PHF10/BAF45A, are exchanged for homologous alternative ACTL6B/BAF53B and DPF1/BAF45B or DPF3/BAF45C subunits in neuron-specific complexes (nBAF). The npBAF complex is essential for the self-renewal/proliferative capacity of the multipotent neural stem cells. The nBAF complex along with CREST plays a role regulating the activity of genes essential for dendrite growth. Critical regulator of myeloid differentiation, controlling granulocytopoiesis and the expression of genes involved in neutrophil granule formation. This is SWI/SNF complex subunit SMARCC2 (SMARCC2) from Homo sapiens (Human).